A 297-amino-acid chain; its full sequence is Light-independent protochlorophyllide reductase iron-sulfur ATP-binding protein (297 aa).

ATP is bound by residues 41–46 (GIGKST) and lysine 70. Serine 45 is a binding site for Mg(2+). Residues cysteine 126 and cysteine 160 each coordinate [4Fe-4S] cluster. ATP is bound by residues 211–212 (NR) and 235–237 (PDL).

Belongs to the NifH/BchL/ChlL family. As to quaternary structure, homodimer. Protochlorophyllide reductase is composed of three subunits; BchL, BchN and BchB. The cofactor is [4Fe-4S] cluster.

It catalyses the reaction chlorophyllide a + oxidized 2[4Fe-4S]-[ferredoxin] + 2 ADP + 2 phosphate = protochlorophyllide a + reduced 2[4Fe-4S]-[ferredoxin] + 2 ATP + 2 H2O. It functions in the pathway porphyrin-containing compound metabolism; bacteriochlorophyll biosynthesis (light-independent). Its function is as follows. Component of the dark-operative protochlorophyllide reductase (DPOR) that uses Mg-ATP and reduced ferredoxin to reduce ring D of protochlorophyllide (Pchlide) to form chlorophyllide a (Chlide). This reaction is light-independent. The L component serves as a unique electron donor to the NB-component of the complex, and binds Mg-ATP. In Methylorubrum populi (strain ATCC BAA-705 / NCIMB 13946 / BJ001) (Methylobacterium populi), this protein is Light-independent protochlorophyllide reductase iron-sulfur ATP-binding protein.